Consider the following 505-residue polypeptide: MTERIRNVALRSKVCPAETASELIKHGDVVGTSGFTGAGYPKEVPKALAQRMEAAHDRGEKYQISLITGASTGPQLDGELAKANGVYFRSPFNTDATMRNRINAGETEYFDNHLGQVAGRAVQGNYGKFNIALVEATAITEDGGIVPTSSVGNSQTFLNLAEKVIIEVNEWQNPMLEGIHDIWDGNVSGVPTRDIVPIVRADQRVGGPVLRVNPDKIAAIVRTNDRDRNAPFAAPDETAKAIAGYLLDFFGHEVKQNRLPPSLLPLQSGVGNVANAVLEGLKEGPFENLVGYSEVIQDGMLAMLDSGRMRIASASSFSLSPEAAEEINNRMDFFRSKIILRQQDVSNSPGIIRRLGCIAMNGMIEADIYGNVNSTRVMGSKMMNGIGGSGDFARSSYLSIFLSPSTAKGGKISAIVPMAAHVDHIMQDAQIFVTEQGLADLRGLSPVQRAREIISKCAHPDYRPMLQDYFDRALKNSFGKHTPHLLTEALSWHQRFIDTGTMLPS.

Residue 269-273 coordinates CoA; it reads GVGNV. Glutamate 294 serves as the catalytic 5-glutamyl coenzyme A thioester intermediate. Residues isoleucine 364, asparagine 384, glycine 388, and lysine 408 each contribute to the CoA site.

Belongs to the acetyl-CoA hydrolase/transferase family. Homodimer.

The enzyme catalyses succinyl-CoA + acetate = succinate + acetyl-CoA. It participates in metabolic intermediate biosynthesis; acetyl-CoA biosynthesis. With respect to regulation, subject to competitive inhibition by coenzyme A (CoA). Its function is as follows. Utilizes succinyl-CoA to convert toxic acetate to acetyl-CoA and succinate. Required for growth on acetic acid and for resistance to high levels of acetic acid. Also has low activity with acetoacetate as substrate. The protein is Succinyl-CoA:acetate CoA-transferase of Acetobacter aceti.